The following is a 1264-amino-acid chain: MAEQKSTNMWNWEVTGFESKKSPSSEEGVHRTPSSMLRRYSIPKNSLPPHSSELASKVQSLKDKVQLAKDDYVGLRQEATDLQEYSNAKLERVTRYLGVLADKSRKLDQYALETEARISPLINEKKRLFNDLLTTKGNVKVFCRARPLFEDEGPSIIEFPDNCTIRVNTSDDTLSNPKKEFEFDRVYGPQVGQASLFSDVQPFVQSALDGSNVSIFAYGQTHAGKTYTMEGSNQDRGLYARCFEELMDLANSDSTSASQFSFSVSVFELYNEQVRDLLSGCQSNLPKINMGLRESVIELSQEKVDNPSEFMRVLNSAFQNRGNDKSKSTVTHLIVSIHICYSNTITRENVISKLSLVDLAGSEGLTVEDDNGDHVTDLLHVTNSISALGDVLSSLTSKRDTIPYENSFLTRILADSLGGSSKTLMIVNICPSARNLSEIMSCLNYAARARNTVPSLGNRDTIKKWRDVANDARKEVLEKERENQRLKQEVTGLKQALKEANDQCVLLYNEVQRAWRVSFTLQSDLKSENAMVVDKHKIEKEQNFQLRNQIAQLLQLEQEQKLQAQQQDSTIQNLQSKVKDLESQLSKALKSDMTRSRDPLEPQPRAAENTLDSSAVTKKLEEELKKRDALIERLHEENEKLFDRLTEKSVASSTQVSSPSSKASPTVQPADVDSAGTLPSSVDKNEGTITLVKSSSELVKTTPAGEYLTAALNDFDPEQYEGLAAIADGANKLLMLVLAAVIKAGASREHEILAEIRDSVFSFIRKMEPRRVMDTMLVSRVRILYIRSLLARSPELQSIKVSPVERFLEKPYTGRTRSSSGSSSPGRSPVRYYDEQIYGFKVNLKPEKKSKLVSVVSRIRGHDQDTGRQQVTGGKLREIQDEAKSFAIGNKPLAALFVHTPAGELQRQIRSWLAESFEFLSVTADDVSGVTTGQLELLSTAIMDGWMAGVGAAVPPHTDALGQLLSEYAKRVYTSQMQHLKDIAGTLASEEAEDAGQVAKLRSALESVDHKRRKILQQMRSDAALFTLEEGSSPVQNPSTAAEDSRLASLISLDAILKQVKEITRQASVHVLSKSKKKALLESLDELNERMPSLLDVDHPCAQREIDTAHQLVETIPEQEDNLQDEKRPSIDSISSTETDVSQWNVLQFNTGGSSAPFIIKCGANSNSELVIKADARIQEPKGGEIVRVVPRPSVLENMSLEEMKQVFGQLPEALSSLALARTADGTRARYSRLYRTLAMKVPSLRDLVGELEKGGVLKDTKST.

A compositionally biased stretch (polar residues) spans 1 to 10; the sequence is MAEQKSTNMW. Positions 1-52 are disordered; it reads MAEQKSTNMWNWEVTGFESKKSPSSEEGVHRTPSSMLRRYSIPKNSLPPHSS. The span at 18-30 shows a compositional bias: basic and acidic residues; that stretch reads ESKKSPSSEEGVH. A coiled-coil region spans residues 53–84; that stretch reads ELASKVQSLKDKVQLAKDDYVGLRQEATDLQE. Residues 138–452 enclose the Kinesin motor domain; sequence NVKVFCRARP…LNYAARARNT (315 aa). ATP is bound at residue 219–226; that stretch reads GQTHAGKT. 3 coiled-coil regions span residues 462 to 511, 545 to 592, and 617 to 640; these read IKKW…YNEV, QLRN…LKSD, and TKKLEEELKKRDALIERLHEENEK. The segment at 588-615 is disordered; the sequence is ALKSDMTRSRDPLEPQPRAAENTLDSSA. The segment covering 589 to 600 has biased composition (basic and acidic residues); that stretch reads LKSDMTRSRDPL. Positions 652 to 668 are enriched in low complexity; the sequence is SSTQVSSPSSKASPTVQ. Disordered stretches follow at residues 652-684 and 1117-1136; these read SSTQVSSPSSKASPTVQPADVDSAGTLPSSVDK and PEQEDNLQDEKRPSIDSISS.

Belongs to the TRAFAC class myosin-kinesin ATPase superfamily. Kinesin family. KIN-14 subfamily. In terms of assembly, homodimer and heterodimer with KCA1. Interacts with CDKA-1. Interacts with At4g14310. In terms of tissue distribution, expressed in roots, leaves, stems and flowers.

It localises to the cell membrane. Functionally, kinesin-like protein required for chloroplast movements and anchor to the plasma membrane. Mediates chloroplast movement via chloroplast actin (cp-actin) filaments. Required for the chloroplast avoidance response under high intensity blue light. Mediates redundantly with CHUP1 the nuclear avoidance response under high intensity blue light. May be involved in division plane determination. This is Kinesin-like protein KIN-14B from Arabidopsis thaliana (Mouse-ear cress).